The following is a 585-amino-acid chain: Arginine--tRNA ligase (585 aa).

The short motif at 131-141 (ANPTGPMHVGH) is the 'HIGH' region element.

It belongs to the class-I aminoacyl-tRNA synthetase family. In terms of assembly, monomer.

The protein resides in the cytoplasm. It catalyses the reaction tRNA(Arg) + L-arginine + ATP = L-arginyl-tRNA(Arg) + AMP + diphosphate. In Brucella abortus (strain S19), this protein is Arginine--tRNA ligase.